We begin with the raw amino-acid sequence, 225 residues long: KDP operon transcriptional regulatory protein KdpE (225 aa).

Residues 3–116 (NVLIVEDEQA…ELQARLRVAL (114 aa)) enclose the Response regulatory domain. At Asp52 the chain carries 4-aspartylphosphate. Residues 126 to 225 (DPLVKFSDVT…ETGIGYRFML (100 aa)) constitute a DNA-binding region (ompR/PhoB-type).

Phosphorylated by KdpD.

It localises to the cytoplasm. Its function is as follows. Member of the two-component regulatory system KdpD/KdpE involved in the regulation of the kdp operon. The protein is KDP operon transcriptional regulatory protein KdpE (kdpE) of Escherichia coli (strain K12).